The following is a 449-amino-acid chain: Glucose-6-phosphate isomerase (449 aa).

Glu291 acts as the Proton donor in catalysis. Active-site residues include His312 and Lys426.

This sequence belongs to the GPI family.

It is found in the cytoplasm. The catalysed reaction is alpha-D-glucose 6-phosphate = beta-D-fructose 6-phosphate. Its pathway is carbohydrate biosynthesis; gluconeogenesis. It functions in the pathway carbohydrate degradation; glycolysis; D-glyceraldehyde 3-phosphate and glycerone phosphate from D-glucose: step 2/4. Catalyzes the reversible isomerization of glucose-6-phosphate to fructose-6-phosphate. This chain is Glucose-6-phosphate isomerase, found in Streptococcus agalactiae serotype Ia (strain ATCC 27591 / A909 / CDC SS700).